A 71-amino-acid chain; its full sequence is Small ribosomal subunit protein bS21 (71 aa).

The disordered stretch occupies residues 47–71 (RENATRAKRHAKRVARENARNTRLY). Residues 60-71 (VARENARNTRLY) are compositionally biased toward basic and acidic residues.

Belongs to the bacterial ribosomal protein bS21 family.

This chain is Small ribosomal subunit protein bS21, found in Histophilus somni (strain 129Pt) (Haemophilus somnus).